The chain runs to 275 residues: Phage-like element PBSX protein XkdF (275 aa).

Positions 247 to 275 are disordered; the sequence is KARGASKQTADDTGGNTEQVKKSIWSGLL.

This sequence to B.subtilis YqbD.

The protein is Phage-like element PBSX protein XkdF (xkdF) of Bacillus subtilis (strain 168).